Reading from the N-terminus, the 357-residue chain is S-adenosylmethionine:tRNA ribosyltransferase-isomerase (357 aa).

This sequence belongs to the QueA family. Monomer.

Its subcellular location is the cytoplasm. It catalyses the reaction 7-aminomethyl-7-carbaguanosine(34) in tRNA + S-adenosyl-L-methionine = epoxyqueuosine(34) in tRNA + adenine + L-methionine + 2 H(+). Its pathway is tRNA modification; tRNA-queuosine biosynthesis. Its function is as follows. Transfers and isomerizes the ribose moiety from AdoMet to the 7-aminomethyl group of 7-deazaguanine (preQ1-tRNA) to give epoxyqueuosine (oQ-tRNA). The sequence is that of S-adenosylmethionine:tRNA ribosyltransferase-isomerase from Buchnera aphidicola subsp. Schizaphis graminum (strain Sg).